The chain runs to 329 residues: uncharacterized protein (329 aa).

The next 2 helical transmembrane spans lie at 13-35 and 229-248; these read IPVLIISLITLVASAYALYWATI and VIPAALCTVSIIFAGLSVVY.

It localises to the cell membrane. This is an uncharacterized protein from Archaeoglobus fulgidus (strain ATCC 49558 / DSM 4304 / JCM 9628 / NBRC 100126 / VC-16).